The sequence spans 347 residues: Lipoyl synthase (347 aa).

Positions 55, 60, 66, 81, 85, 88, and 292 each coordinate [4Fe-4S] cluster. The 215-residue stretch at W67–P281 folds into the Radical SAM core domain.

This sequence belongs to the radical SAM superfamily. Lipoyl synthase family. [4Fe-4S] cluster is required as a cofactor.

Its subcellular location is the cytoplasm. The catalysed reaction is [[Fe-S] cluster scaffold protein carrying a second [4Fe-4S](2+) cluster] + N(6)-octanoyl-L-lysyl-[protein] + 2 oxidized [2Fe-2S]-[ferredoxin] + 2 S-adenosyl-L-methionine + 4 H(+) = [[Fe-S] cluster scaffold protein] + N(6)-[(R)-dihydrolipoyl]-L-lysyl-[protein] + 4 Fe(3+) + 2 hydrogen sulfide + 2 5'-deoxyadenosine + 2 L-methionine + 2 reduced [2Fe-2S]-[ferredoxin]. Its pathway is protein modification; protein lipoylation via endogenous pathway; protein N(6)-(lipoyl)lysine from octanoyl-[acyl-carrier-protein]: step 2/2. In terms of biological role, catalyzes the radical-mediated insertion of two sulfur atoms into the C-6 and C-8 positions of the octanoyl moiety bound to the lipoyl domains of lipoate-dependent enzymes, thereby converting the octanoylated domains into lipoylated derivatives. The protein is Lipoyl synthase of Corynebacterium urealyticum (strain ATCC 43042 / DSM 7109).